The primary structure comprises 209 residues: Kynurenine formamidase (209 aa).

W19 provides a ligand contact to substrate. Zn(2+)-binding residues include H49, H53, and D55. H59 (proton donor/acceptor) is an active-site residue. H160 and E172 together coordinate Zn(2+).

The protein belongs to the Cyclase 1 superfamily. KynB family. In terms of assembly, homodimer. Zn(2+) serves as cofactor.

It carries out the reaction N-formyl-L-kynurenine + H2O = L-kynurenine + formate + H(+). It functions in the pathway amino-acid degradation; L-tryptophan degradation via kynurenine pathway; L-kynurenine from L-tryptophan: step 2/2. Its function is as follows. Catalyzes the hydrolysis of N-formyl-L-kynurenine to L-kynurenine, the second step in the kynurenine pathway of tryptophan degradation. The sequence is that of Kynurenine formamidase from Geobacillus thermodenitrificans (strain NG80-2).